A 396-amino-acid chain; its full sequence is Ribosomal RNA large subunit methyltransferase I (396 aa).

In terms of domain architecture, PUA spans 2–79; that stretch reads SIRIKLKPGR…KEEAIDRDFF (78 aa).

The protein belongs to the methyltransferase superfamily. RlmI family.

The protein localises to the cytoplasm. The enzyme catalyses cytidine(1962) in 23S rRNA + S-adenosyl-L-methionine = 5-methylcytidine(1962) in 23S rRNA + S-adenosyl-L-homocysteine + H(+). Functionally, specifically methylates the cytosine at position 1962 (m5C1962) of 23S rRNA. This Shewanella amazonensis (strain ATCC BAA-1098 / SB2B) protein is Ribosomal RNA large subunit methyltransferase I.